The following is a 261-amino-acid chain: Ribonuclease HII (261 aa).

Residues 72–260 (AVICGIDEVG…IKSIVLEKLD (189 aa)) form the RNase H type-2 domain. Residues D78, E79, and D170 each coordinate a divalent metal cation.

This sequence belongs to the RNase HII family. Mn(2+) is required as a cofactor. Requires Mg(2+) as cofactor.

It is found in the cytoplasm. The enzyme catalyses Endonucleolytic cleavage to 5'-phosphomonoester.. Its function is as follows. Endonuclease that specifically degrades the RNA of RNA-DNA hybrids. The polypeptide is Ribonuclease HII (Staphylococcus carnosus (strain TM300)).